The chain runs to 389 residues: Serpin-Z3 (389 aa).

The segment at 337–361 is RCL; that stretch reads GTEAAAVSVAIMMPQCLMRNPDFVA.

The protein belongs to the serpin family.

Probable serine protease inhibitor. In Arabidopsis thaliana (Mouse-ear cress), this protein is Serpin-Z3.